Reading from the N-terminus, the 113-residue chain is Large ribosomal subunit protein uL24 (113 aa).

Belongs to the universal ribosomal protein uL24 family. In terms of assembly, part of the 50S ribosomal subunit.

Its function is as follows. One of two assembly initiator proteins, it binds directly to the 5'-end of the 23S rRNA, where it nucleates assembly of the 50S subunit. In terms of biological role, one of the proteins that surrounds the polypeptide exit tunnel on the outside of the subunit. The polypeptide is Large ribosomal subunit protein uL24 (Chlamydia felis (strain Fe/C-56) (Chlamydophila felis)).